A 358-amino-acid polypeptide reads, in one-letter code: Aerobic magnesium-protoporphyrin IX monomethyl ester [oxidative] cyclase (358 aa).

The protein belongs to the AcsF family. The cofactor is Fe cation.

The catalysed reaction is Mg-protoporphyrin IX 13-monomethyl ester + 3 NADPH + 3 O2 + 2 H(+) = 3,8-divinyl protochlorophyllide a + 3 NADP(+) + 5 H2O. It functions in the pathway porphyrin-containing compound metabolism; chlorophyll biosynthesis. Functionally, catalyzes the formation of the isocyclic ring in chlorophyll biosynthesis in aerobic conditions. Mediates the cyclase reaction, which results in the formation of divinylprotochlorophyllide (Pchlide) characteristic of all chlorophylls from magnesium-protoporphyrin IX 13-monomethyl ester (MgPMME). This Rubrivivax gelatinosus (Rhodocyclus gelatinosus) protein is Aerobic magnesium-protoporphyrin IX monomethyl ester [oxidative] cyclase.